The following is a 145-amino-acid chain: 3-hydroxyacyl-[acyl-carrier-protein] dehydratase FabZ (145 aa).

His-51 is a catalytic residue.

This sequence belongs to the thioester dehydratase family. FabZ subfamily.

It localises to the cytoplasm. It carries out the reaction a (3R)-hydroxyacyl-[ACP] = a (2E)-enoyl-[ACP] + H2O. Its function is as follows. Involved in unsaturated fatty acids biosynthesis. Catalyzes the dehydration of short chain beta-hydroxyacyl-ACPs and long chain saturated and unsaturated beta-hydroxyacyl-ACPs. This chain is 3-hydroxyacyl-[acyl-carrier-protein] dehydratase FabZ, found in Staphylococcus saprophyticus subsp. saprophyticus (strain ATCC 15305 / DSM 20229 / NCIMB 8711 / NCTC 7292 / S-41).